Consider the following 100-residue polypeptide: Small ribosomal subunit protein uS14c (100 aa).

Belongs to the universal ribosomal protein uS14 family. Part of the 30S ribosomal subunit.

Its subcellular location is the plastid. The protein localises to the chloroplast. Functionally, binds 16S rRNA, required for the assembly of 30S particles. In Staurastrum punctulatum (Green alga), this protein is Small ribosomal subunit protein uS14c.